Reading from the N-terminus, the 56-residue chain is MFSQSACVQVHIKTNELHTAVVEKVILAMISSCRTDNNQALHKLLHVAVCEENYNV.

In terms of biological role, male determiner protein (M-factor) that controls male somatic sexual differentiation. Acts as a dominant factor that regulates the mRNA splicing of doublesex (dsx) transcripts and promotes expression of male splice forms of dsx. The sequence is that of Male determiner protein Yob from Anopheles gambiae (African malaria mosquito).